Consider the following 205-residue polypeptide: Ribosomal RNA small subunit methyltransferase J (205 aa).

S-adenosyl-L-methionine-binding positions include 56 to 57 (RD), 72 to 73 (ER), and aspartate 124.

Belongs to the methyltransferase superfamily. RsmJ family.

It is found in the cytoplasm. The catalysed reaction is guanosine(1516) in 16S rRNA + S-adenosyl-L-methionine = N(2)-methylguanosine(1516) in 16S rRNA + S-adenosyl-L-homocysteine + H(+). In terms of biological role, specifically methylates the guanosine in position 1516 of 16S rRNA. The protein is Ribosomal RNA small subunit methyltransferase J of Brucella anthropi (strain ATCC 49188 / DSM 6882 / CCUG 24695 / JCM 21032 / LMG 3331 / NBRC 15819 / NCTC 12168 / Alc 37) (Ochrobactrum anthropi).